The following is a 140-amino-acid chain: Probable deoxyuridine 5'-triphosphate nucleotidohydrolase (140 aa).

Substrate is bound by residues 62–64, 76–79, Arg130, and 135–136; these read RSG, GVID, and FG.

Belongs to the dUTPase family. As to quaternary structure, homotrimer. Requires Mg(2+) as cofactor.

The catalysed reaction is dUTP + H2O = dUMP + diphosphate + H(+). It participates in pyrimidine metabolism; dUMP biosynthesis; dUMP from dCTP (dUTP route): step 2/2. Functionally, this enzyme is involved in nucleotide metabolism: it produces dUMP, the immediate precursor of thymidine nucleotides and it decreases the intracellular concentration of dUTP so that uracil cannot be incorporated into DNA. The polypeptide is Probable deoxyuridine 5'-triphosphate nucleotidohydrolase (Schizosaccharomyces pombe (strain 972 / ATCC 24843) (Fission yeast)).